The chain runs to 213 residues: MKVLITGFDPFGGESINPALEAVKKLPNTISNAEIIKLEIPTVFKKSLEKIEANILAHKPDIVISIGQAGGRFGITPERVAINIDDARIEDNEKNQPIDLKVFEDGENAYFTTLPIKAMVKEMQESGIPSSVSNSAGTFVCNHVMYGVLYMINKKYPNIKGGFIHVPYIPSQVVSKPNMPSMSIEDISKGLELSVKAAVENNTDIKTAQGEIC.

Catalysis depends on residues E78, C141, and H165.

The protein belongs to the peptidase C15 family. In terms of assembly, homotetramer.

It localises to the cytoplasm. The catalysed reaction is Release of an N-terminal pyroglutamyl group from a polypeptide, the second amino acid generally not being Pro.. In terms of biological role, removes 5-oxoproline from various penultimate amino acid residues except L-proline. The sequence is that of Pyrrolidone-carboxylate peptidase from Clostridium botulinum (strain Alaska E43 / Type E3).